A 396-amino-acid chain; its full sequence is Ribosomal RNA large subunit methyltransferase I (396 aa).

A PUA domain is found at 2–81; the sequence is TVRLILAKGR…ESIDIDFFVR (80 aa).

It belongs to the methyltransferase superfamily. RlmI family.

The protein localises to the cytoplasm. The enzyme catalyses cytidine(1962) in 23S rRNA + S-adenosyl-L-methionine = 5-methylcytidine(1962) in 23S rRNA + S-adenosyl-L-homocysteine + H(+). Functionally, specifically methylates the cytosine at position 1962 (m5C1962) of 23S rRNA. In Erwinia tasmaniensis (strain DSM 17950 / CFBP 7177 / CIP 109463 / NCPPB 4357 / Et1/99), this protein is Ribosomal RNA large subunit methyltransferase I.